Consider the following 544-residue polypeptide: Inosine-5'-monophosphate dehydrogenase (544 aa).

CBS domains follow at residues 132 to 192 (FITD…PIKS) and 194 to 250 (MTTE…PYAS). NAD(+) contacts are provided by residues 288–290 (DSS) and 338–340 (GMG). Positions 340 and 342 each coordinate K(+). Ser-343 is an IMP binding site. Cys-345 is a K(+) binding site. Cys-345 functions as the Thioimidate intermediate in the catalytic mechanism. IMP is bound by residues 378–380 (DGG), 401–402 (GG), and 425–429 (YRGMG). Arg-458 acts as the Proton acceptor in catalysis. Residue Gln-470 participates in IMP binding. Positions 529, 530, and 531 each coordinate K(+).

This sequence belongs to the IMPDH/GMPR family. As to quaternary structure, homotetramer. K(+) serves as cofactor.

It localises to the cytoplasm. It carries out the reaction IMP + NAD(+) + H2O = XMP + NADH + H(+). It participates in purine metabolism; XMP biosynthesis via de novo pathway; XMP from IMP: step 1/1. Its activity is regulated as follows. Mycophenolic acid (MPA) is a non-competitive inhibitor that prevents formation of the closed enzyme conformation by binding to the same site as the amobile flap. In contrast, mizoribine monophosphate (MZP) is a competitive inhibitor that induces the closed conformation. MPA is a potent inhibitor of mammalian IMPDHs but a poor inhibitor of the bacterial enzymes. MZP is a more potent inhibitor of bacterial IMPDH. In terms of biological role, catalyzes the conversion of inosine 5'-phosphate (IMP) to xanthosine 5'-phosphate (XMP), the first committed and rate-limiting step in the de novo synthesis of guanine nucleotides, and therefore plays an important role in the regulation of cell growth. In Cryptococcus neoformans var. neoformans serotype D (strain JEC21 / ATCC MYA-565) (Filobasidiella neoformans), this protein is Inosine-5'-monophosphate dehydrogenase.